Consider the following 84-residue polypeptide: Small ribosomal subunit protein bS16 (84 aa).

It belongs to the bacterial ribosomal protein bS16 family.

The polypeptide is Small ribosomal subunit protein bS16 (Endomicrobium trichonymphae).